Here is a 403-residue protein sequence, read N- to C-terminus: MTELQVDPAASADPAAAADTPRHPAATLPPDSVGLVVPERMHFAEPLPLRNGSQLVGYDLMVETYGTLNAERSNAVLICHALNASHHVAGVHAEGEVGWWDNMVGPGKPVDTNRFFVIGVNNLGSCFGSTGPMSPHPQTGQPYGARFPVVTVEDWVNAQARVADRFGIRQFAAVMGGSLGGMQALAWSLMYPERVRHCVVVASTPKLSAQNIAFNEVARSAILSDPDFHGGDYYAHNVKPKRGLRVARMIGHITYLSDEDMAEKFGRELKAEDIRFSFDVEFQVESYLRYQGDKFAEYFDANTYLLITRALDYFDPALAYEGSLTRAVAHTRASYLVVSFTTDWRFAPARSRELVKALLDNKRPVTYGEIDAPHGHDAFLLEDARYHALVRAYYERIAQEIGA.

The tract at residues 1–31 (MTELQVDPAASADPAAAADTPRHPAATLPPD) is disordered. Over residues 7–26 (DPAASADPAAAADTPRHPAA) the composition is skewed to low complexity. Residues 74–383 (NAVLICHALN…HGHDAFLLED (310 aa)) enclose the AB hydrolase-1 domain. The active-site Nucleophile is Ser178. Arg248 serves as a coordination point for substrate. Residues Asp343 and His376 contribute to the active site. Substrate is bound at residue Asp377.

This sequence belongs to the AB hydrolase superfamily. MetX family. Homodimer.

Its subcellular location is the cytoplasm. The catalysed reaction is L-homoserine + succinyl-CoA = O-succinyl-L-homoserine + CoA. Its pathway is amino-acid biosynthesis; L-methionine biosynthesis via de novo pathway; O-succinyl-L-homoserine from L-homoserine: step 1/1. Functionally, transfers a succinyl group from succinyl-CoA to L-homoserine, forming succinyl-L-homoserine. This Ralstonia nicotianae (strain ATCC BAA-1114 / GMI1000) (Ralstonia solanacearum) protein is Homoserine O-succinyltransferase.